We begin with the raw amino-acid sequence, 205 residues long: Golgi apparatus membrane protein TVP23 homolog B (205 aa).

An N-acetylmethionine modification is found at Met1. A disordered region spans residues 1–21; the sequence is MLQQDSNDDTEDVSLFDAEEE. 4 consecutive transmembrane segments (helical) span residues 34–53, 54–72, 126–146, and 152–172; these read PVASFFHLFFRVSAIIVYLL, CELLSSSFITCMVTIILLL, IFWLGLIACPVLWVIFAFSAL, and KWLAVVIMGVVLQGANLYGYI.

This sequence belongs to the TVP23 family.

It is found in the membrane. This chain is Golgi apparatus membrane protein TVP23 homolog B (TVP23B), found in Pongo abelii (Sumatran orangutan).